A 658-amino-acid chain; its full sequence is Glycine--tRNA ligase beta subunit (658 aa).

It belongs to the class-II aminoacyl-tRNA synthetase family. In terms of assembly, tetramer of two alpha and two beta subunits.

The protein localises to the cytoplasm. The enzyme catalyses tRNA(Gly) + glycine + ATP = glycyl-tRNA(Gly) + AMP + diphosphate. The chain is Glycine--tRNA ligase beta subunit from Rickettsia bellii (strain OSU 85-389).